The sequence spans 300 residues: Probable phytol kinase, chloroplastic (300 aa).

The transit peptide at 1 to 36 (MAAARPALPSSPTSLLLARSTSAPDLAARRPRRWLV) directs the protein to the chloroplast. The next 7 helical transmembrane spans lie at 60–78 (LLRD…YSLV), 98–118 (VVHV…SNST), 122–142 (FFAA…GLGF), 168–188 (YVIV…IGIV), 227–247 (FISG…LGYI), 254–274 (ALGK…IPVT), and 276–296 (VVDD…LLFG).

Belongs to the polyprenol kinase family.

The protein localises to the plastid. The protein resides in the chloroplast membrane. It catalyses the reaction phytol + CTP = phytyl phosphate + CDP + H(+). It functions in the pathway cofactor biosynthesis; tocopherol biosynthesis. Its function is as follows. Involved in the activation and reutilization of phytol from chlorophyll degradation in plant metabolism, including tocopherol biosynthesis. Catalyzes the conversion of phytol to phytol monophosphate (PMP). This chain is Probable phytol kinase, chloroplastic, found in Triticum aestivum (Wheat).